The following is a 108-amino-acid chain: UPF0145 protein LGAS_1099 (108 aa).

This sequence belongs to the UPF0145 family.

This chain is UPF0145 protein LGAS_1099, found in Lactobacillus gasseri (strain ATCC 33323 / DSM 20243 / BCRC 14619 / CIP 102991 / JCM 1131 / KCTC 3163 / NCIMB 11718 / NCTC 13722 / AM63).